A 103-amino-acid polypeptide reads, in one-letter code: Growth-regulated alpha protein (103 aa).

The first 30 residues, 1–30, serve as a signal peptide directing secretion; sequence MARAANPAPRLLGAAMLLLLLVAAGRRAAG. 2 cysteine pairs are disulfide-bonded: cysteine 39-cysteine 65 and cysteine 41-cysteine 81.

It belongs to the intercrine alpha (chemokine CxC) family.

Its subcellular location is the secreted. Has chemotactic activity for neutrophils. This Ovis aries (Sheep) protein is Growth-regulated alpha protein (CXCL1).